A 132-amino-acid polypeptide reads, in one-letter code: Ribosome-binding factor A (132 aa).

The protein belongs to the RbfA family. In terms of assembly, monomer. Binds 30S ribosomal subunits, but not 50S ribosomal subunits or 70S ribosomes.

It localises to the cytoplasm. In terms of biological role, one of several proteins that assist in the late maturation steps of the functional core of the 30S ribosomal subunit. Associates with free 30S ribosomal subunits (but not with 30S subunits that are part of 70S ribosomes or polysomes). Required for efficient processing of 16S rRNA. May interact with the 5'-terminal helix region of 16S rRNA. The protein is Ribosome-binding factor A of Xanthomonas campestris pv. campestris (strain 8004).